A 213-amino-acid chain; its full sequence is Uridine kinase (213 aa).

14–21 (GASASGKS) provides a ligand contact to ATP.

The protein belongs to the uridine kinase family.

The protein resides in the cytoplasm. It catalyses the reaction uridine + ATP = UMP + ADP + H(+). The catalysed reaction is cytidine + ATP = CMP + ADP + H(+). It functions in the pathway pyrimidine metabolism; CTP biosynthesis via salvage pathway; CTP from cytidine: step 1/3. The protein operates within pyrimidine metabolism; UMP biosynthesis via salvage pathway; UMP from uridine: step 1/1. The protein is Uridine kinase of Vibrio cholerae serotype O1 (strain ATCC 39315 / El Tor Inaba N16961).